The primary structure comprises 283 residues: 4-diphosphocytidyl-2-C-methyl-D-erythritol kinase (283 aa).

Residue lysine 12 is part of the active site. An ATP-binding site is contributed by 99 to 109; the sequence is PLAAGIGGGSA. Aspartate 141 is a catalytic residue.

This sequence belongs to the GHMP kinase family. IspE subfamily.

It carries out the reaction 4-CDP-2-C-methyl-D-erythritol + ATP = 4-CDP-2-C-methyl-D-erythritol 2-phosphate + ADP + H(+). The protein operates within isoprenoid biosynthesis; isopentenyl diphosphate biosynthesis via DXP pathway; isopentenyl diphosphate from 1-deoxy-D-xylulose 5-phosphate: step 3/6. Its function is as follows. Catalyzes the phosphorylation of the position 2 hydroxy group of 4-diphosphocytidyl-2C-methyl-D-erythritol. This chain is 4-diphosphocytidyl-2-C-methyl-D-erythritol kinase, found in Sphingopyxis alaskensis (strain DSM 13593 / LMG 18877 / RB2256) (Sphingomonas alaskensis).